We begin with the raw amino-acid sequence, 153 residues long: NADH dehydrogenase [ubiquinone] 1 beta subcomplex subunit 11, mitochondrial (153 aa).

A mitochondrion-targeting transit peptide spans 1 to 29; sequence MAAGLFGLSARRLLAAAATRGLPAARVRW. The segment at 49-72 is disordered; it reads PEPTTQWQEDLDPEDENLYEKNPD. A helical membrane pass occupies residues 89–109; it reads LVFFFGVSIILVLGSTFVAYL.

This sequence belongs to the complex I NDUFB11 subunit family. Complex I is composed of 45 different subunits. Interacts with BCAP31.

It is found in the mitochondrion inner membrane. Its function is as follows. Accessory subunit of the mitochondrial membrane respiratory chain NADH dehydrogenase (Complex I), that is believed not to be involved in catalysis. Complex I functions in the transfer of electrons from NADH to the respiratory chain. The immediate electron acceptor for the enzyme is believed to be ubiquinone. The sequence is that of NADH dehydrogenase [ubiquinone] 1 beta subcomplex subunit 11, mitochondrial (NDUFB11) from Pongo pygmaeus (Bornean orangutan).